A 261-amino-acid polypeptide reads, in one-letter code: Carbonic anhydrase 1 (261 aa).

At Ala-2 the chain carries N-acetylalanine. The region spanning 4 to 261 is the Alpha-carbonic anhydrase domain; it reads PDWGYDGENG…LKGRTVKASF (258 aa). The tract at residues 22–41 is disordered; that stretch reads PIANGNNQSPIDIKTSETKR. The Proton donor/acceptor role is filled by His-65. Zn(2+) is bound by residues His-95, His-97, and His-120. Substrate-binding positions include Thr-200 and 200–201; that span reads TH.

It belongs to the alpha-carbonic anhydrase family. The cofactor is Zn(2+).

It is found in the cytoplasm. It carries out the reaction hydrogencarbonate + H(+) = CO2 + H2O. It catalyses the reaction urea = cyanamide + H2O. With respect to regulation, inhibited by acetazolamide. Functionally, catalyzes the reversible hydration of carbon dioxide. Can hydrate cyanamide to urea. The sequence is that of Carbonic anhydrase 1 (CA1) from Ovis aries (Sheep).